Here is a 520-residue protein sequence, read N- to C-terminus: Putative lipase ATG15 (520 aa).

Topologically, residues 1-14 (MLHKSPSRKRFASP) are cytoplasmic. The helical; Signal-anchor for type II membrane protein transmembrane segment at 15 to 35 (LHLGCILTLTVLCLIAYYFAL) threads the bilayer. Topologically, residues 36-520 (PDYLSVGKSS…WLGFCTKYEL (485 aa)) are lumenal. N173, N202, and N208 each carry an N-linked (GlcNAc...) asparagine glycan. The active-site Charge relay system is S332.

This sequence belongs to the AB hydrolase superfamily. Lipase family. As to quaternary structure, binds to both phosphatidylinositol (PI) and phosphatidylinositol 3,5-bisphosphate (PIP2).

The protein localises to the endosome. Its subcellular location is the multivesicular body membrane. The protein resides in the prevacuolar compartment membrane. It catalyses the reaction a triacylglycerol + H2O = a diacylglycerol + a fatty acid + H(+). Lipase which is essential for lysis of subvacuolar cytoplasm to vacuole targeted bodies and intravacuolar autophagic bodies. Involved in the lysis of intravacuolar multivesicular body (MVB) vesicles. The intravacuolar membrane disintegration by ATG15 is critical to life span extension. This is Putative lipase ATG15 (ATG15) from Saccharomyces cerevisiae (strain YJM789) (Baker's yeast).